Consider the following 391-residue polypeptide: Na(+)/H(+) antiporter NhaA (391 aa).

The next 11 membrane-spanning stretches (helical) occupy residues 14 to 34 (AGGI…NSPL), 59 to 79 (LLLW…GLEV), 95 to 115 (SLPT…YLFF), 124 to 144 (VGWA…MALL), 154 to 174 (VFLL…IALF), 177 to 197 (TDLS…LVAL), 213 to 233 (IILW…GVVI), 261 to 281 (FLIL…NVGF), 287 to 307 (PVPV…VLLF), 328 to 348 (IAPV…IASL), and 363 to 383 (IGIL…LSKV).

The protein belongs to the NhaA Na(+)/H(+) (TC 2.A.33) antiporter family.

The protein resides in the cell inner membrane. It carries out the reaction Na(+)(in) + 2 H(+)(out) = Na(+)(out) + 2 H(+)(in). In terms of biological role, na(+)/H(+) antiporter that extrudes sodium in exchange for external protons. This Shewanella amazonensis (strain ATCC BAA-1098 / SB2B) protein is Na(+)/H(+) antiporter NhaA.